The sequence spans 85 residues: Small ribosomal subunit protein uS17 (85 aa).

The protein belongs to the universal ribosomal protein uS17 family. In terms of assembly, part of the 30S ribosomal subunit.

Its function is as follows. One of the primary rRNA binding proteins, it binds specifically to the 5'-end of 16S ribosomal RNA. This chain is Small ribosomal subunit protein uS17, found in Citrifermentans bemidjiense (strain ATCC BAA-1014 / DSM 16622 / JCM 12645 / Bem) (Geobacter bemidjiensis).